The chain runs to 213 residues: tRNA (guanine-N(7)-)-methyltransferase (213 aa).

S-adenosyl-L-methionine contacts are provided by Glu38, Glu63, Asp91, and Asp113. The active site involves Asp113. Substrate is bound by residues Lys117, Asp149, and 192 to 195; that span reads TEYE.

The protein belongs to the class I-like SAM-binding methyltransferase superfamily. TrmB family.

It carries out the reaction guanosine(46) in tRNA + S-adenosyl-L-methionine = N(7)-methylguanosine(46) in tRNA + S-adenosyl-L-homocysteine. It functions in the pathway tRNA modification; N(7)-methylguanine-tRNA biosynthesis. Its function is as follows. Catalyzes the formation of N(7)-methylguanine at position 46 (m7G46) in tRNA. In Mycoplasmoides gallisepticum (strain R(low / passage 15 / clone 2)) (Mycoplasma gallisepticum), this protein is tRNA (guanine-N(7)-)-methyltransferase.